The chain runs to 294 residues: Filamin-B (294 aa).

2 Filamin repeats span residues 1–67 and 71–163; these read GTRL…KVRV and GQAG…KAKV. Residues Ser-61 and Ser-157 each carry the phosphoserine modification. A Glycyl lysine isopeptide (Lys-Gly) (interchain with G-Cter in ISG15) cross-link involves residue Lys-160. The interval 164–198 is hinge 2; it reads TGQRLVGPGSTNETSSILVESVTRSSTETCYSAIP. The self-association site, tail stretch occupies residues 164–294; sequence TGQRLVGPGS…PGSPFHVTVP (131 aa). 2 positions are modified to phosphoserine: Ser-173 and Ser-184. Residues 199–293 form a Filamin 24 repeat; that stretch reads KASSDASKVT…IPGSPFHVTV (95 aa). N6-succinyllysine occurs at positions 210 and 216. The residue at position 268 (Lys-268) is an N6-acetyllysine.

Belongs to the filamin family. Homodimer. Interacts with FLNA, FLNC, INPPL1, ITGB1A, ITGB1D, ITGB3, ITGB6, MYOT, MYOZ1, PSEN1 and PSEN2. Interacts with MICALL2. Interacts with RFLNA and RFLNB. Interacts with HTLV-I viral p13 protein. Interacts with ASB2; the interaction targets FLNB for proteasomal degradation. ISGylation prevents ability to interact with the upstream activators of the JNK cascade and inhibits IFNA-induced JNK signaling. Post-translationally, ubiquitination by a SCF-like complex containing ASB2 leads to proteasomal degradation which promotes muscle differentiation.

Its subcellular location is the cytoplasm. The protein resides in the cell cortex. It localises to the cytoskeleton. It is found in the myofibril. The protein localises to the sarcomere. Its subcellular location is the z line. Connects cell membrane constituents to the actin cytoskeleton. May promote orthogonal branching of actin filaments and links actin filaments to membrane glycoproteins. Anchors various transmembrane proteins to the actin cytoskeleton. The sequence is that of Filamin-B (FLNB) from Oryctolagus cuniculus (Rabbit).